Reading from the N-terminus, the 142-residue chain is Large ribosomal subunit protein uL13 (142 aa).

Belongs to the universal ribosomal protein uL13 family. As to quaternary structure, part of the 50S ribosomal subunit.

This protein is one of the early assembly proteins of the 50S ribosomal subunit, although it is not seen to bind rRNA by itself. It is important during the early stages of 50S assembly. This chain is Large ribosomal subunit protein uL13, found in Pyrococcus furiosus (strain ATCC 43587 / DSM 3638 / JCM 8422 / Vc1).